The primary structure comprises 555 residues: Developmental and secondary metabolism regulator veA (555 aa).

3 disordered regions span residues Met-1 to Arg-23, Glu-39 to Pro-60, and Arg-234 to Ser-533. Positions Glu-13–Arg-23 are enriched in basic and acidic residues. The Velvet domain occupies Gly-25–Arg-228. The Nuclear localization signal signature appears at Glu-39–Cys-44. Residues Lys-239–Asp-258 show a composition bias toward basic and acidic residues. Pro residues predominate over residues Ala-311–Pro-331. 2 stretches are compositionally biased toward polar residues: residues Arg-336–Tyr-372 and His-380–Glu-389. The interval Gln-439–Gly-479 is PEST. Composition is skewed to basic and acidic residues over residues Arg-492 to Arg-503 and Ala-519 to Ser-533.

Belongs to the velvet family. VeA subfamily. Component of the heterotrimeric velvet complex composed of laeA, veA and velB; VeA acting as a bridging protein between laeA and velB.

Its subcellular location is the nucleus. It is found in the cytoplasm. Component of the velvet transcription factor complex that controls sexual/asexual developmental ratio in response to light, promoting sexual development in the darkness while stimulating asexual sporulation under illumination. The velvet complex hat acts as a global regulator for secondary metabolite gene expression. Increases spore dispersing capacity by impacting conidiophore architecture. The protein is Developmental and secondary metabolism regulator veA of Aspergillus niger (strain ATCC 1015 / CBS 113.46 / FGSC A1144 / LSHB Ac4 / NCTC 3858a / NRRL 328 / USDA 3528.7).